The chain runs to 486 residues: MAWAPPGERLREDARCPVCLDFLQEPVSVDCGHSFCLRCISEFCEKSDGAQGGVYACPQCRGPFRPSGFRPNRQLAGLVESVRRLGLGAGPGARRCARHGEDLSRFCEEDEAALCWVCDAGPEHRTHRTAPLQEAAGSYQVKLQMALELMRKELEDALTQEANVGKKTVIWKEKVEMQRQRFRLEFEKHRGFLAQEEQRQLRRLEAEERATLQRLRESKSRLVQQSKALKELADELQERCQRPALGLLEGVRGVLSRSKAVTRLEAENIPMELKTACCIPGRRELLRKFQVDVKLDPATAHPSLLLTADLRSVQDGEPWRDVPNNPERFDTWPCILGLQSFSSGRHYWEVLVGEGAEWGLGVCQDTLPRKGETTPSPENGVWALWLLKGNEYMVLASPSVPLLQLESPRCIGIFLDYEAGEISFYNVTDGSYIYTFNQLFSGLLRPYFFICDATPLILPPTTIAGSGNWASRDHLDPASDVRDDHL.

The segment at 16–61 (CPVCLDFLQEPVSVDCGHSFCLRCISEFCEKSDGAQGGVYACPQCR) adopts an RING-type zinc-finger fold. Residues 91–132 (PGARRCARHGEDLSRFCEEDEAALCWVCDAGPEHRTHRTAPL) form a B box-type zinc finger. Positions 96, 99, 118, and 124 each coordinate Zn(2+). Positions 193–242 (LAQEEQRQLRRLEAEERATLQRLRESKSRLVQQSKALKELADELQERCQR) form a coiled coil. The B30.2/SPRY domain occupies 273–463 (LKTACCIPGR…TPLILPPTTI (191 aa)).

It belongs to the TRIM/RBCC family. In terms of tissue distribution, expressed in erythroblasts.

It catalyses the reaction S-ubiquitinyl-[E2 ubiquitin-conjugating enzyme]-L-cysteine + [acceptor protein]-L-lysine = [E2 ubiquitin-conjugating enzyme]-L-cysteine + N(6)-ubiquitinyl-[acceptor protein]-L-lysine.. It functions in the pathway protein modification; protein ubiquitination. Functionally, E3 ubiquitin ligase induced during late erythropoiesis. Directly binds and ubiquitinates the intermediate chain of the microtubule motor dynein (DYNC1LI1/DYNC1LI2), stimulating the degradation of the dynein holoprotein complex. May participate in the erythroblast enucleation process through regulation of nuclear polarization. In Homo sapiens (Human), this protein is E3 ubiquitin-protein ligase TRIM58 (TRIM58).